A 59-amino-acid polypeptide reads, in one-letter code: Large ribosomal subunit protein bL32C (59 aa).

It belongs to the bacterial ribosomal protein bL32 family.

This chain is Large ribosomal subunit protein bL32C (rpmF3), found in Enterococcus faecalis (strain ATCC 700802 / V583).